A 668-amino-acid polypeptide reads, in one-letter code: Probable syringafactin export ATP-binding/permease protein SyfD (668 aa).

The 239-residue stretch at 22-260 (LRLQQVSRSF…APEAQPATPP (239 aa)) folds into the ABC transporter domain. ATP is bound at residue 58 to 65 (GASGSGKS). Residues 242 to 263 (RRTAQTTQPAPEAQPATPPGPA) form a disordered region. Low complexity predominate over residues 245 to 256 (AQTTQPAPEAQP). The next 5 helical transmembrane spans lie at 267-287 (LLAS…ALIS), 293-313 (LLTM…SAIG), 541-561 (LTLL…IGVM), 602-622 (MGGV…TLFV), and 631-651 (LASV…FGFV).

It belongs to the ABC transporter superfamily. Macrolide exporter (TC 3.A.1.122) family. In terms of assembly, probably part of a tripartite efflux system, which is composed of an inner membrane transporter, a periplasmic membrane fusion protein, and an outer membrane component.

The protein resides in the cell inner membrane. Functionally, probably involved in the export of syringafactins. This chain is Probable syringafactin export ATP-binding/permease protein SyfD, found in Pseudomonas syringae pv. tomato (strain ATCC BAA-871 / DC3000).